Reading from the N-terminus, the 113-residue chain is Stigma/stylar cysteine-rich adhesin (113 aa).

Residues 1-22 form the signal peptide; it reads MARSSAVCFLLLLAFLIGTASA. 4 disulfides stabilise this stretch: Cys25/Cys72, Cys35/Cys49, Cys50/Cys95, and Cys70/Cys109.

It belongs to the plant LTP family. Highly expressed in style and stigma, abundant in young leaves and petals, and low expression in young anthers at pollen mother cell stage with an active tapetum. Not expressed in mature leaves or in pollen grains or tubes. Found in the stylar transmitting tract epidermis and in the stylar extracellular matrix.

Functionally, acts as an adhesive agent between the pollen tube wall and the stylar transmitting tract epidermis. Binds a stylar pectin in a pH-dependent manner. Enhances activity of chemocyanin, a diffusible chemotropic factor. The polypeptide is Stigma/stylar cysteine-rich adhesin (SCA) (Lilium longiflorum (Trumpet lily)).